Reading from the N-terminus, the 131-residue chain is Small ribosomal subunit protein uS11 (131 aa).

Basic residues predominate over residues Met-1 to Arg-15. The segment at Met-1–Ala-23 is disordered.

This sequence belongs to the universal ribosomal protein uS11 family. In terms of assembly, part of the 30S ribosomal subunit. Interacts with proteins S7 and S18. Binds to IF-3.

Located on the platform of the 30S subunit, it bridges several disparate RNA helices of the 16S rRNA. Forms part of the Shine-Dalgarno cleft in the 70S ribosome. The polypeptide is Small ribosomal subunit protein uS11 (Clostridium perfringens (strain 13 / Type A)).